We begin with the raw amino-acid sequence, 75 residues long: MKKTAAIISACMLTFALSACSGSNYVMHTNDGRTIVSDGKPQTDNDTGMISYKDANGNKQQINRTDVKEMVELDQ.

Residues 1 to 19 (MKKTAAIISACMLTFALSA) form the signal peptide. Residue cysteine 20 is the site of N-palmitoyl cysteine attachment. A lipid anchor (S-diacylglycerol cysteine) is attached at cysteine 20.

This sequence to E.coli YgdR.

The protein localises to the cell membrane. This is an uncharacterized protein from Escherichia coli O6:H1 (strain CFT073 / ATCC 700928 / UPEC).